A 764-amino-acid polypeptide reads, in one-letter code: Kinesin-like protein KIN-14N (764 aa).

The disordered stretch occupies residues 1–50; sequence MSTRATRPGMLHQKENAADAQAGKRQRTAAGSAARAPLSANAAPPAPDPA. Residues 29–50 show a composition bias toward low complexity; that stretch reads AAGSAARAPLSANAAPPAPDPA. The stretch at 105 to 416 forms a coiled coil; that stretch reads AEIGKLNGLL…RLHNTILELK (312 aa). In terms of domain architecture, Kinesin motor spans 418 to 747; sequence NIRVFCRVRP…LRFAARVNSC (330 aa). 498 to 505 serves as a coordination point for ATP; the sequence is GQTGSGKT.

It belongs to the TRAFAC class myosin-kinesin ATPase superfamily. Kinesin family. KIN-14 subfamily.

The chain is Kinesin-like protein KIN-14N from Oryza sativa subsp. japonica (Rice).